Reading from the N-terminus, the 368-residue chain is Chaperone protein DnaJ (368 aa).

Residues 5-70 enclose the J domain; it reads DYYQVLGVPR…KKRKLYDTHG (66 aa). A CR-type zinc finger spans residues 124–201; the sequence is GVERQIQIPT…CNGAGRVEDH (78 aa). Positions 137, 140, 153, 156, 175, 178, 189, and 192 each coordinate Zn(2+). 4 CXXCXGXG motif repeats span residues 137–144, 153–160, 175–182, and 189–196; these read CTHCHGSG, CGTCRGSG, CPHCGGRG, and CKVCNGAG.

This sequence belongs to the DnaJ family. Homodimer. Zn(2+) serves as cofactor.

It is found in the cytoplasm. Functionally, participates actively in the response to hyperosmotic and heat shock by preventing the aggregation of stress-denatured proteins and by disaggregating proteins, also in an autonomous, DnaK-independent fashion. Unfolded proteins bind initially to DnaJ; upon interaction with the DnaJ-bound protein, DnaK hydrolyzes its bound ATP, resulting in the formation of a stable complex. GrpE releases ADP from DnaK; ATP binding to DnaK triggers the release of the substrate protein, thus completing the reaction cycle. Several rounds of ATP-dependent interactions between DnaJ, DnaK and GrpE are required for fully efficient folding. Also involved, together with DnaK and GrpE, in the DNA replication of plasmids through activation of initiation proteins. The polypeptide is Chaperone protein DnaJ (Xylella fastidiosa (strain M23)).